A 447-amino-acid polypeptide reads, in one-letter code: BAG family molecular chaperone regulator 5 (447 aa).

BAG domains follow at residues 9-86, 95-167, 182-260, 275-350, and 365-442; these read SISR…EQNA, QNIF…EDCM, SVAK…DLEE, SIIK…DLKE, and PHKA…DMKS.

In terms of assembly, binds to the ATPase domain of HSP/HSP70 chaperones. Binds PRKN. Interacts with HSPA8. Interacts with JPH2.

Functionally, co-chaperone for HSP/HSP70 proteins. It functions as a nucleotide-exchange factor promoting the release of ADP from HSP70, thereby activating HSP70-mediated protein refolding. Has an essential role in maintaining proteostasis at junctional membrane complexes (JMC), where it may function as a scaffold between the HSPA8 chaperone and JMC proteins enabling correct, HSPA8-dependent JMC protein folding. Inhibits both auto-ubiquitination of PRKN and ubiquitination of target proteins by PRKN. The chain is BAG family molecular chaperone regulator 5 (Bag5) from Mus musculus (Mouse).